Consider the following 196-residue polypeptide: Elongation factor Ts (196 aa).

Residues 80 to 83 (TDFV) are involved in Mg(2+) ion dislocation from EF-Tu.

Belongs to the EF-Ts family. Heterotetramer composed of two EF-Ts.EF-Tu dimer complexes.

The protein resides in the cytoplasm. Functionally, associates with the EF-Tu.GDP complex and induces the exchange of GDP to GTP. It remains bound to the aminoacyl-tRNA.EF-Tu.GTP complex up to the GTP hydrolysis stage on the ribosome. The sequence is that of Elongation factor Ts (tsf) from Thermus thermophilus (strain ATCC 27634 / DSM 579 / HB8).